Consider the following 319-residue polypeptide: Acetyl esterase (319 aa).

The short motif at 91-93 (HGG) is the Involved in the stabilization of the negatively charged intermediate by the formation of the oxyanion hole element. Active-site residues include S165, D262, and H292.

The protein belongs to the 'GDXG' lipolytic enzyme family. As to quaternary structure, homodimer. Interacts with MalT and MelA.

It localises to the cytoplasm. Displays esterase activity towards short chain fatty esters (acyl chain length of up to 8 carbons). Able to hydrolyze triacetylglycerol (triacetin) and tributyrylglycerol (tributyrin), but not trioleylglycerol (triolein) or cholesterol oleate. Negatively regulates MalT activity by antagonizing maltotriose binding. Inhibits MelA galactosidase activity. This chain is Acetyl esterase, found in Escherichia coli O17:K52:H18 (strain UMN026 / ExPEC).